Reading from the N-terminus, the 1861-residue chain is Polyketide synthase 2 (1861 aa).

The Ketosynthase family 3 (KS3) domain occupies 109-525; sequence DSKIAIIGMS…GGNSALLLED (417 aa). Catalysis depends on for beta-ketoacyl synthase activity residues cysteine 264, histidine 399, and histidine 441. Residues 626-931 are malonyl-CoA:ACP transacylase (MAT) domain; it reads GFVFSGQGAQ…PSLHRKDDGW (306 aa). Catalysis depends on serine 716, which acts as the For acyl/malonyl transferase activity. Positions 1008–1312 are product template (PT) domain; the sequence is TSSVQKVIQQ…VFGGMTVLPP (305 aa). An N-terminal hotdog fold region spans residues 1012–1146; the sequence is QKVIQQTDGP…CILRFADPKS (135 aa). In terms of domain architecture, PKS/mFAS DH spans 1012-1318; the sequence is QKVIQQTDGP…VLPPRRGADA (307 aa). Residue histidine 1045 is the Proton acceptor; for dehydratase activity of the active site. A C-terminal hotdog fold region spans residues 1174 to 1318; sequence DSLLSKGIVY…VLPPRRGADA (145 aa). The active-site Proton donor; for dehydratase activity is the aspartate 1232. The region spanning 1356–1433 is the Carrier 1 domain; sequence SPQSGAIHRI…ELRLFLAADQ (78 aa). An O-(pantetheine 4'-phosphoryl)serine modification is found at serine 1393. A disordered region spans residues 1441 to 1470; that stretch reads CESSNGQHTPQTSDKGSGTLTAQKPDHDTD. Over residues 1442-1462 the composition is skewed to polar residues; it reads ESSNGQHTPQTSDKGSGTLTA. The Carrier 2 domain maps to 1472-1546; that stretch reads EMTLNRVCAI…SLQKTLRGTE (75 aa). At serine 1506 the chain carries O-(pantetheine 4'-phosphoryl)serine. The thioesterase (TE) domain stretch occupies residues 1582–1855; the sequence is ASAPHATSIL…IIEMSNLIGD (274 aa). The For thioesterase activity role is filled by serine 1685.

In terms of biological role, polyketide synthase; part of the Pks2 gene cluster that mediates the formation of infectious structures (appressoria), enabling these fungi to kill insects faster. The product of the Pks2 gene cluster is different from the one of Pks1 and has still not been identified. This is Polyketide synthase 2 from Metarhizium acridum (strain CQMa 102).